Reading from the N-terminus, the 422-residue chain is Gamma-glutamyl phosphate reductase (422 aa).

The protein belongs to the gamma-glutamyl phosphate reductase family.

The protein localises to the cytoplasm. The catalysed reaction is L-glutamate 5-semialdehyde + phosphate + NADP(+) = L-glutamyl 5-phosphate + NADPH + H(+). It participates in amino-acid biosynthesis; L-proline biosynthesis; L-glutamate 5-semialdehyde from L-glutamate: step 2/2. In terms of biological role, catalyzes the NADPH-dependent reduction of L-glutamate 5-phosphate into L-glutamate 5-semialdehyde and phosphate. The product spontaneously undergoes cyclization to form 1-pyrroline-5-carboxylate. The chain is Gamma-glutamyl phosphate reductase from Chlorobium phaeovibrioides (strain DSM 265 / 1930) (Prosthecochloris vibrioformis (strain DSM 265)).